The primary structure comprises 344 residues: 3,4-dihydroxy-2-butanone 4-phosphate synthase (344 aa).

A DHBP synthase region spans residues 1–202 (MILKRVTEAL…VSDLISYRLE (202 aa)). D-ribulose 5-phosphate is bound by residues 27–28 (RE), Asp32, 139–143 (RTGHT), and Glu163. Glu28 contributes to the Mg(2+) binding site. Mg(2+) is bound at residue His142. Residues 203-344 (NESLLKMFCQ…GLKLVETISL (142 aa)) are GTP cyclohydrolase II-like.

The protein in the N-terminal section; belongs to the DHBP synthase family. In the C-terminal section; belongs to the GTP cyclohydrolase II family. It depends on Mg(2+) as a cofactor. Mn(2+) serves as cofactor.

It carries out the reaction D-ribulose 5-phosphate = (2S)-2-hydroxy-3-oxobutyl phosphate + formate + H(+). It functions in the pathway cofactor biosynthesis; riboflavin biosynthesis; 2-hydroxy-3-oxobutyl phosphate from D-ribulose 5-phosphate: step 1/1. Catalyzes the conversion of D-ribulose 5-phosphate to formate and 3,4-dihydroxy-2-butanone 4-phosphate. The sequence is that of 3,4-dihydroxy-2-butanone 4-phosphate synthase (ribB) from Helicobacter pylori (strain ATCC 700392 / 26695) (Campylobacter pylori).